The chain runs to 246 residues: Probable transcriptional regulatory protein APJL_1171 (246 aa).

This sequence belongs to the TACO1 family.

The protein resides in the cytoplasm. The protein is Probable transcriptional regulatory protein APJL_1171 of Actinobacillus pleuropneumoniae serotype 3 (strain JL03).